A 491-amino-acid chain; its full sequence is Cytosolic Fe-S cluster assembly factor NAR1 (491 aa).

[4Fe-4S] cluster-binding residues include Cys-20, Cys-59, Cys-62, Cys-65, Cys-177, Cys-231, Cys-412, and Cys-416.

This sequence belongs to the NARF family. Interacts with CIA1.

Its function is as follows. Component of the cytosolic Fe/S protein assembly machinery. Required for maturation of extramitochondrial Fe/S proteins. May play a role in the transfer of pre-assembled Fe/S clusters to target apoproteins. The chain is Cytosolic Fe-S cluster assembly factor NAR1 (NAR1) from Saccharomyces cerevisiae (strain YJM789) (Baker's yeast).